The chain runs to 239 residues: Ribosomal RNA small subunit methyltransferase G (239 aa).

S-adenosyl-L-methionine is bound by residues Gly77, Phe82, 128 to 129 (AE), and Arg147.

This sequence belongs to the methyltransferase superfamily. RNA methyltransferase RsmG family.

It is found in the cytoplasm. In terms of biological role, specifically methylates the N7 position of guanine in position 535 of 16S rRNA. This is Ribosomal RNA small subunit methyltransferase G from Bacillus cereus (strain AH187).